We begin with the raw amino-acid sequence, 464 residues long: Neuronal acetylcholine receptor subunit beta-3 (464 aa).

Positions 1–30 are cleaved as a signal peptide; it reads MTGFLRVFLVLSATLSGSWVTLTATAGLSS. Residues 31–238 lie on the Extracellular side of the membrane; the sequence is VAEHEDALLR…VTYSFVLRRL (208 aa). Residues N55 and N172 are each glycosylated (N-linked (GlcNAc...) asparagine). C159 and C173 are oxidised to a cystine. The next 3 helical transmembrane spans lie at 239 to 263, 271 to 288, and 305 to 326; these read PLFY…VFYL, LSLS…LLVI, and YLLF…VINV. At 327–434 the chain is on the cytoplasmic side; that stretch reads HHRSSSTYHP…WKFVAQVLDR (108 aa). The chain crosses the membrane as a helical span at residues 435–453; it reads IFLWLFLIASVLGSILIFI.

It belongs to the ligand-gated ion channel (TC 1.A.9) family. Acetylcholine receptor (TC 1.A.9.1) subfamily. Beta-3/CHRNB3 sub-subfamily. Neuronal AChR seems to be composed of two different type of subunits: alpha and beta. CHRNB3/beta-3 subunit is only able to form functional nAChRs when co-assembled with another beta subunit. Participates in pentameric assemblies along with CHRNA4/alpha-4 and CHRNB2/beta-2 subunits and with CHRNA6/alpha-6 as well, forming stoichiometries such as (CHRNA3:CHRNB4)2:CHRNB3, (CHRNA4:CHRNB2)2:CHRNB3 or (CHRNA6:CHRNB2)2:CHRNB3.

It is found in the synaptic cell membrane. Its subcellular location is the cell membrane. It carries out the reaction Ca(2+)(in) = Ca(2+)(out). The catalysed reaction is K(+)(in) = K(+)(out). The enzyme catalyses Na(+)(in) = Na(+)(out). With respect to regulation, activated by a myriad of ligands such as acetylcholine, cytisine, nicotine, choline and epibatidine. Component of neuronal acetylcholine receptors (nAChRs) that function as pentameric, ligand-gated cation channels with high calcium permeability among other activities. nAChRs are excitatory neurotrasnmitter receptors formed by a collection of nAChR subunits known to mediate synaptic transmission in the nervous system and the neuromuscular junction. Each nAchR subunit confers differential attributes to channel properties, including activation, deactivation and desensitization kinetics, pH sensitivity, cation permeability, and binding to allosteric modulators. Has an accessory rather than functional role and is only able to form functional nAChRs when co-assembled with another beta subunit. Participates in pentameric assemblies along with CHRNA3, CHRNA4, CHRNA6, CHRNB2 and CHRNB4. Modulates receptor assembly and increases receptor sensitivity to nicotine when associated with CHRNB2, CHRNA4 and/or CHRNA6 as well as CHRNA3 and CHRNB4. Seems to play a role in nicotine addiction. This chain is Neuronal acetylcholine receptor subunit beta-3 (Chrnb3), found in Rattus norvegicus (Rat).